A 239-amino-acid chain; its full sequence is MRSGVIAQKVGMTRVFTETGEHIPVTVLKLGNCQVVGHRTTEKNGYVALQLGSGSRKTVYMPKAERGQFAVAKVEPKRKLAEFRVSEDSLIPVGAEIQADHFVVGQFVDVTGTSVGKGFAGGMKRWNFGGLRATHGVSISHRSIGSTGGRQDPGKTWKNKKMPGHMGVDRITTLNLRVVQTDVERGLILVEGAVPGSKGGWISVRDAVKKPLPKEAPKPGKFKVAGEQAAEAPAMQEGA.

Disordered stretches follow at residues 140–164 (SHRS…KMPG) and 211–239 (PLPK…QEGA). Gln-151 is modified (N5-methylglutamine).

It belongs to the universal ribosomal protein uL3 family. Part of the 50S ribosomal subunit. Forms a cluster with proteins L14 and L19. In terms of processing, methylated by PrmB.

Functionally, one of the primary rRNA binding proteins, it binds directly near the 3'-end of the 23S rRNA, where it nucleates assembly of the 50S subunit. The sequence is that of Large ribosomal subunit protein uL3 from Bradyrhizobium sp. (strain ORS 278).